We begin with the raw amino-acid sequence, 339 residues long: Biotin synthase (339 aa).

One can recognise a Radical SAM core domain in the interval 55-282; the sequence is NAVQLSTLLS…KAVVRLSAGR (228 aa). [4Fe-4S] cluster is bound by residues C70, C74, and C77. 4 residues coordinate [2Fe-2S] cluster: C114, C145, C205, and R277.

This sequence belongs to the radical SAM superfamily. Biotin synthase family. In terms of assembly, homodimer. [4Fe-4S] cluster serves as cofactor. [2Fe-2S] cluster is required as a cofactor.

The enzyme catalyses (4R,5S)-dethiobiotin + (sulfur carrier)-SH + 2 reduced [2Fe-2S]-[ferredoxin] + 2 S-adenosyl-L-methionine = (sulfur carrier)-H + biotin + 2 5'-deoxyadenosine + 2 L-methionine + 2 oxidized [2Fe-2S]-[ferredoxin]. It functions in the pathway cofactor biosynthesis; biotin biosynthesis; biotin from 7,8-diaminononanoate: step 2/2. In terms of biological role, catalyzes the conversion of dethiobiotin (DTB) to biotin by the insertion of a sulfur atom into dethiobiotin via a radical-based mechanism. This Burkholderia orbicola (strain MC0-3) protein is Biotin synthase.